A 432-amino-acid chain; its full sequence is Probable anion transporter 5 (432 aa).

The signal sequence occupies residues 1-23; that stretch reads MKLSNIPQRYVIVFLTFLSTCVC. Transmembrane regions (helical) follow at residues 50–70, 78–98, 101–121, 140–160, 164–184, 229–249, 273–293, 305–325, 331–351, 360–380, and 405–425; these read TILS…GWAA, VLLL…LDPN, GLLV…FPSI, ITTS…PALV, GPES…LLWI, LPVW…YVLM, VPYL…DYLI, KFLN…LPMF, VILC…GFAV, YAGI…IIGV, and VVFF…LLFS.

The protein belongs to the major facilitator superfamily. Sodium/anion cotransporter (TC 2.A.1.14) family. Ubiquitous.

It localises to the golgi apparatus membrane. Its function is as follows. Inorganic phosphate and probable anion transporter. The sequence is that of Probable anion transporter 5 (ANTR5) from Arabidopsis thaliana (Mouse-ear cress).